A 242-amino-acid chain; its full sequence is MNDVIIRQLAHLIPYQPLWEAMQTFTARRQSQTTDEIWFLEHEPVFTQGLAGKPEHILNSGNIPLIRTDRGGQVTYHGPGQLMMYLLLDLNRLGLSTRTFVRTIENTVAESLQEWGIPAQGKETAPGVYVDDKKICSIGLRVRKGFSYHGLALNVAMDLTPFSCINPCGFKGLMMTQIQDYVNPIEMDAVKRTIIPLFLKNFGYNQPAIMVETSLEFLIDDHLRSFSEKLGERETVTNSRQN.

Positions 31 to 206 constitute a BPL/LPL catalytic domain; that stretch reads SQTTDEIWFL…LFLKNFGYNQ (176 aa). Substrate-binding positions include 70 to 77, 137 to 139, and 150 to 152; these read RGGQVTYH, SIG, and GLA. The active-site Acyl-thioester intermediate is cysteine 168.

This sequence belongs to the LipB family.

Its subcellular location is the cytoplasm. It carries out the reaction octanoyl-[ACP] + L-lysyl-[protein] = N(6)-octanoyl-L-lysyl-[protein] + holo-[ACP] + H(+). Its pathway is protein modification; protein lipoylation via endogenous pathway; protein N(6)-(lipoyl)lysine from octanoyl-[acyl-carrier-protein]: step 1/2. In terms of biological role, catalyzes the transfer of endogenously produced octanoic acid from octanoyl-acyl-carrier-protein onto the lipoyl domains of lipoate-dependent enzymes. Lipoyl-ACP can also act as a substrate although octanoyl-ACP is likely to be the physiological substrate. The protein is Octanoyltransferase of Coxiella burnetii (strain Dugway 5J108-111).